Reading from the N-terminus, the 182-residue chain is Fimbrial subunit type 1 (182 aa).

An N-terminal signal peptide occupies residues 1–23 (MKIKTLAIVVLSALSLSSAAALA). A disulfide bridge links Cys44 with Cys84.

The protein belongs to the fimbrial protein family.

It localises to the fimbrium. In Klebsiella pneumoniae, this protein is Fimbrial subunit type 1.